The primary structure comprises 458 residues: NADH-quinone oxidoreductase subunit N 1 (458 aa).

14 consecutive transmembrane segments (helical) span residues Ala-12–Leu-32, Glu-37–Phe-57, Phe-70–Leu-90, Phe-101–Ala-121, Leu-124–Ile-144, Phe-159–Ala-179, Ile-199–Phe-219, Ala-230–Phe-250, Ser-266–Ile-286, Met-293–Thr-313, Val-321–Phe-341, Ile-361–Val-381, Gly-393–Leu-413, and Val-438–Ile-458.

Belongs to the complex I subunit 2 family. As to quaternary structure, NDH-1 is composed of 14 different subunits. Subunits NuoA, H, J, K, L, M, N constitute the membrane sector of the complex.

The protein resides in the cell inner membrane. It catalyses the reaction a quinone + NADH + 5 H(+)(in) = a quinol + NAD(+) + 4 H(+)(out). Functionally, NDH-1 shuttles electrons from NADH, via FMN and iron-sulfur (Fe-S) centers, to quinones in the respiratory chain. The immediate electron acceptor for the enzyme in this species is believed to be ubiquinone. Couples the redox reaction to proton translocation (for every two electrons transferred, four hydrogen ions are translocated across the cytoplasmic membrane), and thus conserves the redox energy in a proton gradient. In Thermodesulfovibrio yellowstonii (strain ATCC 51303 / DSM 11347 / YP87), this protein is NADH-quinone oxidoreductase subunit N 1.